We begin with the raw amino-acid sequence, 481 residues long: UDP-glycosyltransferase 71K2 (481 aa).

UDP-alpha-D-glucose is bound by residues serine 285, 350-351, 368-376, and 390-393; these read WA, HCGWNSILE, and YAEQ.

This sequence belongs to the UDP-glycosyltransferase family.

Glycosyltransferase that possesses chalcone and flavonol 2'-O-glycosyltransferase activity. Converts phloretin to phlorizin (phloretin 2'-O-glucoside), a potent antioxidant. Possesses glycosyltransferase activity toward quercetin, isoliquiritigenin, butein and caffeic acid. This Pyrus communis (Pear) protein is UDP-glycosyltransferase 71K2.